A 148-amino-acid polypeptide reads, in one-letter code: Large ribosomal subunit protein bL9 (148 aa).

Belongs to the bacterial ribosomal protein bL9 family.

Its function is as follows. Binds to the 23S rRNA. This Prosthecochloris aestuarii (strain DSM 271 / SK 413) protein is Large ribosomal subunit protein bL9.